Reading from the N-terminus, the 36-residue chain is Allergen Act d 3 (36 aa).

Post-translationally, N-glycosylated.

The polypeptide is Allergen Act d 3 (Actinidia deliciosa (Kiwi)).